The chain runs to 244 residues: High frequency lysogenization protein HflD homolog (244 aa).

This sequence belongs to the HflD family.

It is found in the cytoplasm. The protein resides in the cell inner membrane. The protein is High frequency lysogenization protein HflD homolog of Acinetobacter baumannii (strain ATCC 17978 / DSM 105126 / CIP 53.77 / LMG 1025 / NCDC KC755 / 5377).